The sequence spans 610 residues: UvrABC system protein C (610 aa).

Residues 16–94 (SQPGVYRMYD…IKLYQPRYNV (79 aa)) enclose the GIY-YIG domain. Residues 204–239 (DQVLTQLIARMEKASQDLAFEEAARIRDQIQAVRRV) form the UVR domain.

This sequence belongs to the UvrC family. In terms of assembly, interacts with UvrB in an incision complex.

Its subcellular location is the cytoplasm. In terms of biological role, the UvrABC repair system catalyzes the recognition and processing of DNA lesions. UvrC both incises the 5' and 3' sides of the lesion. The N-terminal half is responsible for the 3' incision and the C-terminal half is responsible for the 5' incision. This chain is UvrABC system protein C, found in Salmonella schwarzengrund (strain CVM19633).